Consider the following 222-residue polypeptide: Cytidylate kinase (222 aa).

Residue 10 to 18 (GPAGSGKSS) participates in ATP binding.

The protein belongs to the cytidylate kinase family. Type 1 subfamily.

The protein localises to the cytoplasm. It catalyses the reaction CMP + ATP = CDP + ADP. The catalysed reaction is dCMP + ATP = dCDP + ADP. This chain is Cytidylate kinase, found in Acholeplasma laidlawii (strain PG-8A).